A 300-amino-acid polypeptide reads, in one-letter code: UDP-N-acetylenolpyruvoylglucosamine reductase (300 aa).

Residues K30–G194 form the FAD-binding PCMH-type domain. Residue R174 is part of the active site. The active-site Proton donor is S223. Residue E293 is part of the active site.

This sequence belongs to the MurB family. It depends on FAD as a cofactor.

It localises to the cytoplasm. The catalysed reaction is UDP-N-acetyl-alpha-D-muramate + NADP(+) = UDP-N-acetyl-3-O-(1-carboxyvinyl)-alpha-D-glucosamine + NADPH + H(+). It participates in cell wall biogenesis; peptidoglycan biosynthesis. Functionally, cell wall formation. The sequence is that of UDP-N-acetylenolpyruvoylglucosamine reductase from Geotalea uraniireducens (strain Rf4) (Geobacter uraniireducens).